The following is a 60-amino-acid chain: Large ribosomal subunit protein bL32c (60 aa).

It belongs to the bacterial ribosomal protein bL32 family.

It localises to the plastid. The protein resides in the chloroplast. This chain is Large ribosomal subunit protein bL32c, found in Psilotum nudum (Whisk fern).